The sequence spans 1410 residues: DNA-directed RNA polymerase subunit beta' (1410 aa).

The Zn(2+) site is built by cysteine 69, cysteine 71, cysteine 84, and cysteine 87. Residues aspartate 461, aspartate 463, and aspartate 465 each contribute to the Mg(2+) site. The Zn(2+) site is built by cysteine 810, cysteine 884, cysteine 891, and cysteine 894.

The protein belongs to the RNA polymerase beta' chain family. The RNAP catalytic core consists of 2 alpha, 1 beta, 1 beta' and 1 omega subunit. When a sigma factor is associated with the core the holoenzyme is formed, which can initiate transcription. Mg(2+) is required as a cofactor. Requires Zn(2+) as cofactor.

The enzyme catalyses RNA(n) + a ribonucleoside 5'-triphosphate = RNA(n+1) + diphosphate. DNA-dependent RNA polymerase catalyzes the transcription of DNA into RNA using the four ribonucleoside triphosphates as substrates. The protein is DNA-directed RNA polymerase subunit beta' of Ehrlichia chaffeensis (strain ATCC CRL-10679 / Arkansas).